A 172-amino-acid chain; its full sequence is MGSGAEASVAERRPFPVSWDQFHRDCRALTWRLNAVGPFHAVVAITRGGLVPAAIVARELGLRVIDTICVASYAHDKQGELQVLKGVSEQTAALGGGTGKGLLIVDDLVDTGKTGRMVRDLLPDAHFATVYAKPKGKPLVDTFITEVSQDTWIFFPWDTGLSFQPPLKDGAA.

Residues 47–48 (RG) and 106–114 (DDLVDTGKT) contribute to the 5-phospho-alpha-D-ribose 1-diphosphate site. Position 107 (Asp107) interacts with Mg(2+). 2 residues coordinate guanine: Asp110 and Ile153. Residues Asp110 and Ile153 each coordinate xanthine. Residues 110-114 (DTGKT) and 152-153 (WI) each bind GMP.

This sequence belongs to the purine/pyrimidine phosphoribosyltransferase family. XGPT subfamily. Homotetramer. It depends on Mg(2+) as a cofactor.

The protein resides in the cell inner membrane. The catalysed reaction is GMP + diphosphate = guanine + 5-phospho-alpha-D-ribose 1-diphosphate. The enzyme catalyses XMP + diphosphate = xanthine + 5-phospho-alpha-D-ribose 1-diphosphate. It catalyses the reaction IMP + diphosphate = hypoxanthine + 5-phospho-alpha-D-ribose 1-diphosphate. The protein operates within purine metabolism; GMP biosynthesis via salvage pathway; GMP from guanine: step 1/1. Its pathway is purine metabolism; XMP biosynthesis via salvage pathway; XMP from xanthine: step 1/1. Purine salvage pathway enzyme that catalyzes the transfer of the ribosyl-5-phosphate group from 5-phospho-alpha-D-ribose 1-diphosphate (PRPP) to the N9 position of the 6-oxopurines guanine and xanthine to form the corresponding ribonucleotides GMP (guanosine 5'-monophosphate) and XMP (xanthosine 5'-monophosphate), with the release of PPi. To a lesser extent, also acts on hypoxanthine. This chain is Xanthine-guanine phosphoribosyltransferase, found in Rhodopseudomonas palustris (strain BisB5).